Here is a 215-residue protein sequence, read N- to C-terminus: Ribonuclease T (215 aa).

The Exonuclease domain occupies 20–194 (VVIDVETAGF…YDTERTAVLF (175 aa)). The Mg(2+) site is built by D23, E25, H181, and D186. H181 acts as the Proton donor/acceptor in catalysis.

The protein belongs to the RNase T family. In terms of assembly, homodimer. Requires Mg(2+) as cofactor.

Functionally, trims short 3' overhangs of a variety of RNA species, leaving a one or two nucleotide 3' overhang. Responsible for the end-turnover of tRNA: specifically removes the terminal AMP residue from uncharged tRNA (tRNA-C-C-A). Also appears to be involved in tRNA biosynthesis. This chain is Ribonuclease T, found in Salmonella paratyphi A (strain ATCC 9150 / SARB42).